Here is a 362-residue protein sequence, read N- to C-terminus: Glutamate 5-kinase (362 aa).

ATP is bound at residue Lys3. Residues Ser43, Asp128, and Asn140 each contribute to the substrate site. Residues 160–161 (TD) and 202–208 (TGGMRTK) contribute to the ATP site. Positions 267-348 (AGAILVDAGA…REIENVLGYS (82 aa)) constitute a PUA domain.

It belongs to the glutamate 5-kinase family.

Its subcellular location is the cytoplasm. The enzyme catalyses L-glutamate + ATP = L-glutamyl 5-phosphate + ADP. It participates in amino-acid biosynthesis; L-proline biosynthesis; L-glutamate 5-semialdehyde from L-glutamate: step 1/2. Its function is as follows. Catalyzes the transfer of a phosphate group to glutamate to form L-glutamate 5-phosphate. This chain is Glutamate 5-kinase, found in Xanthomonas oryzae pv. oryzae (strain KACC10331 / KXO85).